The primary structure comprises 23 residues: DDLFNINAGIVKLFGVTTLDVVR.

Residue asparagine 7 coordinates NAD(+). Position 23 (arginine 23) interacts with substrate.

This sequence belongs to the LDH/MDH superfamily. MDH type 1 family. As to quaternary structure, homodimer.

It carries out the reaction (S)-malate + NAD(+) = oxaloacetate + NADH + H(+). This Pseudotsuga menziesii (Douglas-fir) protein is Malate dehydrogenase.